Consider the following 384-residue polypeptide: DNA replication and repair protein RecF (384 aa).

30 to 37 is a binding site for ATP; that stretch reads GNNAQGKS.

This sequence belongs to the RecF family.

Its subcellular location is the cytoplasm. Its function is as follows. The RecF protein is involved in DNA metabolism; it is required for DNA replication and normal SOS inducibility. RecF binds preferentially to single-stranded, linear DNA. It also seems to bind ATP. The polypeptide is DNA replication and repair protein RecF (Gloeothece citriformis (strain PCC 7424) (Cyanothece sp. (strain PCC 7424))).